The chain runs to 92 residues: Small ribosomal subunit protein uS19 (92 aa).

This sequence belongs to the universal ribosomal protein uS19 family.

In terms of biological role, protein S19 forms a complex with S13 that binds strongly to the 16S ribosomal RNA. The sequence is that of Small ribosomal subunit protein uS19 from Photobacterium profundum (strain SS9).